The chain runs to 390 residues: O-glycoside alpha-1,2-mannosyltransferase omh1 (390 aa).

The active-site Nucleophile is the glutamate 279.

Belongs to the glycosyltransferase 15 family.

It is found in the endoplasmic reticulum. The protein resides in the golgi apparatus. Its function is as follows. Mannosyltransferase involved in O-glycosylation of cell wall and secreted proteins. Plays a major role in extending alpha-1,2-linked mannose in the O-glycan pathway. The chain is O-glycoside alpha-1,2-mannosyltransferase omh1 (omh1) from Schizosaccharomyces pombe (strain 972 / ATCC 24843) (Fission yeast).